The primary structure comprises 326 residues: Probable cell division protein WhiA (326 aa).

The H-T-H motif DNA-binding region spans 275-308 (SLEELGQLAEPPMTKDAVAGRIRRLLAMADKRAR).

Belongs to the WhiA family.

In terms of biological role, involved in cell division and chromosome segregation. The protein is Probable cell division protein WhiA of Saccharopolyspora erythraea (strain ATCC 11635 / DSM 40517 / JCM 4748 / NBRC 13426 / NCIMB 8594 / NRRL 2338).